The following is a 126-amino-acid chain: UPF0538 protein C2orf76 homolog (126 aa).

It belongs to the UPF0538 family.

This chain is UPF0538 protein C2orf76 homolog, found in Mus musculus (Mouse).